A 206-amino-acid chain; its full sequence is Photosynthetic reaction center cytochrome c-551 (206 aa).

Transmembrane regions (helical) follow at residues 10–30 (IALA…VSFL), 49–69 (FMGW…LGKM), and 76–96 (KWFL…FFSL). The heme site is built by Cys152, Cys155, His156, and Met182.

In terms of assembly, component of the photosynthetic reaction center. The reaction center interacts with the Fenna-Matthews-Olson (FMO, fmoA) complex. In terms of processing, binds 1 heme group per subunit.

Its subcellular location is the cell inner membrane. Functionally, monoheme cytochrome which is the immediate electron donor to P840 of the photosynthetic reaction center complex. This Chlorobaculum parvum (strain DSM 263 / NCIMB 8327) (Chlorobium vibrioforme subsp. thiosulfatophilum) protein is Photosynthetic reaction center cytochrome c-551 (pscC).